A 303-amino-acid chain; its full sequence is Glycine--tRNA ligase alpha subunit (303 aa).

This sequence belongs to the class-II aminoacyl-tRNA synthetase family. As to quaternary structure, tetramer of two alpha and two beta subunits.

The protein resides in the cytoplasm. The catalysed reaction is tRNA(Gly) + glycine + ATP = glycyl-tRNA(Gly) + AMP + diphosphate. The chain is Glycine--tRNA ligase alpha subunit (glyQ) from Escherichia coli (strain K12).